A 78-amino-acid polypeptide reads, in one-letter code: NAD(P)H-quinone oxidoreductase subunit O (78 aa).

Belongs to the complex I NdhO subunit family. As to quaternary structure, NDH-1 can be composed of about 15 different subunits; different subcomplexes with different compositions have been identified which probably have different functions.

The protein localises to the cellular thylakoid membrane. It catalyses the reaction a plastoquinone + NADH + (n+1) H(+)(in) = a plastoquinol + NAD(+) + n H(+)(out). It carries out the reaction a plastoquinone + NADPH + (n+1) H(+)(in) = a plastoquinol + NADP(+) + n H(+)(out). Its function is as follows. NDH-1 shuttles electrons from an unknown electron donor, via FMN and iron-sulfur (Fe-S) centers, to quinones in the respiratory and/or the photosynthetic chain. The immediate electron acceptor for the enzyme in this species is believed to be plastoquinone. Couples the redox reaction to proton translocation, and thus conserves the redox energy in a proton gradient. Cyanobacterial NDH-1 also plays a role in inorganic carbon-concentration. The polypeptide is NAD(P)H-quinone oxidoreductase subunit O (Prochlorococcus marinus (strain MIT 9312)).